Here is a 205-residue protein sequence, read N- to C-terminus: Probable molybdenum cofactor guanylyltransferase (205 aa).

Residues 10–12, Lys-22, Asp-69, and Asp-100 contribute to the GTP site; that span reads LAG. Asp-100 contacts Mg(2+).

It belongs to the MobA family. The cofactor is Mg(2+).

Its subcellular location is the cytoplasm. The catalysed reaction is Mo-molybdopterin + GTP + H(+) = Mo-molybdopterin guanine dinucleotide + diphosphate. Its function is as follows. Transfers a GMP moiety from GTP to Mo-molybdopterin (Mo-MPT) cofactor (Moco or molybdenum cofactor) to form Mo-molybdopterin guanine dinucleotide (Mo-MGD) cofactor. The sequence is that of Probable molybdenum cofactor guanylyltransferase from Natranaerobius thermophilus (strain ATCC BAA-1301 / DSM 18059 / JW/NM-WN-LF).